Consider the following 159-residue polypeptide: Protein hunchback (159 aa).

A compositionally biased stretch (basic residues) spans 18 to 34 (HNHHHHHHHGHHQHQQR). Disordered regions lie at residues 18–49 (HNHH…QSPL) and 119–159 (LTPP…KYMA). A compositionally biased stretch (basic and acidic residues) spans 140 to 159 (EPEKEHDLMSNSSEDMKYMA).

The protein belongs to the hunchback C2H2-type zinc-finger protein family.

The protein resides in the nucleus. Gap class segmentation protein that controls development of head structures. The chain is Protein hunchback (hb) from Drosophila soonae (Fruit fly).